A 283-amino-acid chain; its full sequence is uncharacterized protein (283 aa).

The segment covering 1 to 10 (MELNKTSESL) has biased composition (polar residues). 2 disordered regions span residues 1 to 99 (MELN…NPTS) and 255 to 283 (DQEG…EAHI). Composition is skewed to basic and acidic residues over residues 14 to 34 (KIDH…REVR), 42 to 53 (SSTRQEKADRMP), and 61 to 71 (ESSKGSEEGAV).

It belongs to the chlamydial CPn_0705/CT_671/TC_0042 family.

This is an uncharacterized protein from Chlamydia trachomatis serovar D (strain ATCC VR-885 / DSM 19411 / UW-3/Cx).